A 183-amino-acid chain; its full sequence is GMP synthase [glutamine-hydrolyzing] subunit A (183 aa).

The 181-residue stretch at 3 to 183 (HILVVDNHGQ…VFENFVAICE (181 aa)) folds into the Glutamine amidotransferase type-1 domain. C74 (nucleophile) is an active-site residue. Active-site residues include H162 and E164.

In terms of assembly, heterodimer composed of a glutamine amidotransferase subunit (A) and a GMP-binding subunit (B).

The enzyme catalyses XMP + L-glutamine + ATP + H2O = GMP + L-glutamate + AMP + diphosphate + 2 H(+). Its pathway is purine metabolism; GMP biosynthesis; GMP from XMP (L-Gln route): step 1/1. Functionally, catalyzes the synthesis of GMP from XMP. This Halobacterium salinarum (strain ATCC 700922 / JCM 11081 / NRC-1) (Halobacterium halobium) protein is GMP synthase [glutamine-hydrolyzing] subunit A.